A 335-amino-acid chain; its full sequence is Ketol-acid reductoisomerase (NADP(+)) (335 aa).

Residues 1–182 enclose the KARI N-terminal Rossmann domain; it reads MATIIYDNET…GATRAGVYET (182 aa). Residues 25-28, Arg-48, Ser-51, Ser-53, and 83-86 contribute to the NADP(+) site; these read YGSQ and DEKQ. Residue His-108 is part of the active site. Residue Gly-134 participates in NADP(+) binding. Residues 183–328 form the KARI C-terminal knotted domain; that stretch reads TFREETETDL…KEIRANIPWL (146 aa). Residues Asp-191, Glu-195, Glu-227, and Glu-231 each contribute to the Mg(2+) site. Residue Ser-252 coordinates substrate.

Belongs to the ketol-acid reductoisomerase family. It depends on Mg(2+) as a cofactor.

The catalysed reaction is (2R)-2,3-dihydroxy-3-methylbutanoate + NADP(+) = (2S)-2-acetolactate + NADPH + H(+). It catalyses the reaction (2R,3R)-2,3-dihydroxy-3-methylpentanoate + NADP(+) = (S)-2-ethyl-2-hydroxy-3-oxobutanoate + NADPH + H(+). Its pathway is amino-acid biosynthesis; L-isoleucine biosynthesis; L-isoleucine from 2-oxobutanoate: step 2/4. It functions in the pathway amino-acid biosynthesis; L-valine biosynthesis; L-valine from pyruvate: step 2/4. Involved in the biosynthesis of branched-chain amino acids (BCAA). Catalyzes an alkyl-migration followed by a ketol-acid reduction of (S)-2-acetolactate (S2AL) to yield (R)-2,3-dihydroxy-isovalerate. In the isomerase reaction, S2AL is rearranged via a Mg-dependent methyl migration to produce 3-hydroxy-3-methyl-2-ketobutyrate (HMKB). In the reductase reaction, this 2-ketoacid undergoes a metal-dependent reduction by NADPH to yield (R)-2,3-dihydroxy-isovalerate. In Methanosarcina acetivorans (strain ATCC 35395 / DSM 2834 / JCM 12185 / C2A), this protein is Ketol-acid reductoisomerase (NADP(+)).